The following is a 454-amino-acid chain: Membrane-bound lytic murein transglycosylase F (454 aa).

The first 24 residues, 1–24 (MRRPLRRVTVVLLWVALAIGVAWF), serve as a signal peptide directing secretion. The non-LT domain stretch occupies residues 25–265 (YDYRRSMQSL…IYNRYYTAVD (241 aa)). The interval 266–454 (TFDYVDVKKF…YDILKQKKAV (189 aa)) is LT domain. The active site involves Glu-311.

This sequence in the N-terminal section; belongs to the bacterial solute-binding protein 3 family. It in the C-terminal section; belongs to the transglycosylase Slt family.

The protein localises to the cell outer membrane. It catalyses the reaction Exolytic cleavage of the (1-&gt;4)-beta-glycosidic linkage between N-acetylmuramic acid (MurNAc) and N-acetylglucosamine (GlcNAc) residues in peptidoglycan, from either the reducing or the non-reducing ends of the peptidoglycan chains, with concomitant formation of a 1,6-anhydrobond in the MurNAc residue.. Functionally, murein-degrading enzyme that degrades murein glycan strands and insoluble, high-molecular weight murein sacculi, with the concomitant formation of a 1,6-anhydromuramoyl product. Lytic transglycosylases (LTs) play an integral role in the metabolism of the peptidoglycan (PG) sacculus. Their lytic action creates space within the PG sacculus to allow for its expansion as well as for the insertion of various structures such as secretion systems and flagella. The protein is Membrane-bound lytic murein transglycosylase F of Desulfosudis oleivorans (strain DSM 6200 / JCM 39069 / Hxd3) (Desulfococcus oleovorans).